We begin with the raw amino-acid sequence, 403 residues long: Acetyl-CoA acetyltransferase 2 (403 aa).

The Acyl-thioester intermediate role is filled by cysteine 97. Lysine 237 contacts CoA. Alanine 254 contacts K(+). Serine 258 lines the CoA pocket. Position 355 (valine 355) interacts with K(+). Catalysis depends on proton acceptor residues histidine 359 and cysteine 389.

It belongs to the thiolase-like superfamily. Thiolase family. Expressed in root tips, emerging leaves, young leaves, stems, and anthers at the microspore stage.

It localises to the cytoplasm. The protein localises to the peroxisome. It carries out the reaction 2 acetyl-CoA = acetoacetyl-CoA + CoA. The protein operates within metabolic intermediate biosynthesis; (R)-mevalonate biosynthesis; (R)-mevalonate from acetyl-CoA: step 1/3. Functionally, catalyzes the condensation of two molecules of acetyl-CoA to produce acetoacetyl-CoA. Generates the bulk of the acetoacetyl-CoA precursor required for the cytosol-localized, mevalonate-derived isoprenoid biosynthesis. The generated isoprenoids are required for normal growth and development. Essential protein during embryogenesis. This is Acetyl-CoA acetyltransferase 2 from Arabidopsis thaliana (Mouse-ear cress).